The sequence spans 67 residues: LPS-assembly lipoprotein LptM (67 aa).

The signal sequence occupies residues 1 to 19 (MKNVFKTLAVLLTLFSLTG). Residue C20 is the site of N-palmitoyl cysteine attachment. The S-diacylglycerol cysteine moiety is linked to residue C20. Positions 26 to 67 (LYFPPADKNAPPPTKKVDSQTQSTMPDKNDRATGDGPSQVNY) are disordered.

This sequence belongs to the LptM family. As to quaternary structure, interacts with the outer membrane embedded portion of the LPS translocon formed by LptD and LptE (LptDE).

The protein localises to the cell outer membrane. In terms of biological role, component of the lipopolysaccharide (LPS) transport (Lpt) pathway that promotes efficient assembly of the outer membrane LPS translocon (LptDE) by the BAM complex. Facilitates oxidative maturation of LptD by stabilizing a conformation of the LPS translocon in which LptD can efficiently acquire native disulfide bonds, thereby activating the LPS translocon. The sequence is that of LPS-assembly lipoprotein LptM from Salmonella typhi.